The primary structure comprises 194 residues: Probable WRKY transcription factor 51 (194 aa).

The segment at 58–97 (SSETFTGESGGSGSATTLSKKESTNRGSKESDQTKETGHR) is disordered. Positions 76-96 (SKKESTNRGSKESDQTKETGH) are enriched in basic and acidic residues. Positions 104-169 (SKIDVMDDGF…YEGVHNHESL (66 aa)) form a DNA-binding region, WRKY.

The protein belongs to the WRKY group II-c family. Interacts with CAMBP25/VQ15.

The protein resides in the nucleus. In terms of biological role, transcription factor. Interacts specifically with the W box (5'-(T)TGAC[CT]-3'), a frequently occurring elicitor-responsive cis-acting element. Involved in defense responses. May act as positive regulator of salicylic acid (SA)-mediated signaling and negative regulator of jasmonic acid (JA)-mediated signaling. The polypeptide is Probable WRKY transcription factor 51 (WRKY51) (Arabidopsis thaliana (Mouse-ear cress)).